The chain runs to 201 residues: Cytochrome c biogenesis ATP-binding export protein CcmA (201 aa).

The 198-residue stretch at 3-200 (LIAENLGGER…EGAELRMGVA (198 aa)) folds into the ABC transporter domain. 35 to 42 (GPNGSGKS) is an ATP binding site.

It belongs to the ABC transporter superfamily. CcmA exporter (TC 3.A.1.107) family. As to quaternary structure, the complex is composed of two ATP-binding proteins (CcmA) and two transmembrane proteins (CcmB).

It localises to the cell inner membrane. It carries out the reaction heme b(in) + ATP + H2O = heme b(out) + ADP + phosphate + H(+). Part of the ABC transporter complex CcmAB involved in the biogenesis of c-type cytochromes; once thought to export heme, this seems not to be the case, but its exact role is uncertain. Responsible for energy coupling to the transport system. The protein is Cytochrome c biogenesis ATP-binding export protein CcmA of Mesorhizobium japonicum (strain LMG 29417 / CECT 9101 / MAFF 303099) (Mesorhizobium loti (strain MAFF 303099)).